Reading from the N-terminus, the 631-residue chain is 1-deoxy-D-xylulose-5-phosphate synthase (631 aa).

Residues H73 and 114–116 contribute to the thiamine diphosphate site; that span reads GHS. Position 145 (D145) interacts with Mg(2+). Thiamine diphosphate is bound by residues 146 to 147, N174, Y285, and E366; that span reads GA. Residue N174 participates in Mg(2+) binding.

The protein belongs to the transketolase family. DXPS subfamily. Homodimer. Mg(2+) serves as cofactor. Thiamine diphosphate is required as a cofactor.

The enzyme catalyses D-glyceraldehyde 3-phosphate + pyruvate + H(+) = 1-deoxy-D-xylulose 5-phosphate + CO2. It participates in metabolic intermediate biosynthesis; 1-deoxy-D-xylulose 5-phosphate biosynthesis; 1-deoxy-D-xylulose 5-phosphate from D-glyceraldehyde 3-phosphate and pyruvate: step 1/1. In terms of biological role, catalyzes the acyloin condensation reaction between C atoms 2 and 3 of pyruvate and glyceraldehyde 3-phosphate to yield 1-deoxy-D-xylulose-5-phosphate (DXP). The protein is 1-deoxy-D-xylulose-5-phosphate synthase of Desulfitobacterium hafniense (strain DSM 10664 / DCB-2).